Reading from the N-terminus, the 223-residue chain is Ribose-5-phosphate isomerase A (223 aa).

Residues Thr-32 to Thr-35, Asp-83 to Asp-86, and Lys-96 to Gly-99 each bind substrate. The Proton acceptor role is filled by Glu-105. Lys-123 lines the substrate pocket.

This sequence belongs to the ribose 5-phosphate isomerase family. As to quaternary structure, homodimer.

The enzyme catalyses aldehydo-D-ribose 5-phosphate = D-ribulose 5-phosphate. It participates in carbohydrate degradation; pentose phosphate pathway; D-ribose 5-phosphate from D-ribulose 5-phosphate (non-oxidative stage): step 1/1. Functionally, catalyzes the reversible conversion of ribose-5-phosphate to ribulose 5-phosphate. The protein is Ribose-5-phosphate isomerase A of Acinetobacter baumannii (strain SDF).